The sequence spans 184 residues: Endoribonuclease YbeY (184 aa).

Acidic residues-rich tracts occupy residues 1–11 (MTVEVGADENP) and 19–29 (DGAGDESDDED). Positions 1 to 37 (MTVEVGADENPDFAHDETDGAGDESDDEDAQGRDPEL) are disordered. Residues H146, H150, and H156 each coordinate Zn(2+).

It belongs to the endoribonuclease YbeY family. Requires Zn(2+) as cofactor.

It is found in the cytoplasm. Its function is as follows. Single strand-specific metallo-endoribonuclease involved in late-stage 70S ribosome quality control and in maturation of the 3' terminus of the 16S rRNA. This chain is Endoribonuclease YbeY, found in Burkholderia mallei (strain ATCC 23344).